A 232-amino-acid polypeptide reads, in one-letter code: Protein FAM246B (232 aa).

Positions 19–31 (EVLRRVTGRRRDP) are enriched in basic and acidic residues. Disordered stretches follow at residues 19–47 (EVLRRVTGRRRDPGPQSNGPGREDARAPG), 80–101 (AAGAGERTGAHSRGSVCSVCGE), 151–179 (ALLPPPPPSPPARREPRAVPRAAPRGPTL), and 191–232 (AASR…GGGD). Over residues 211–220 (APARKNHKKM) the composition is skewed to basic residues.

Belongs to the FAM246 family.

The protein is Protein FAM246B of Homo sapiens (Human).